Reading from the N-terminus, the 680-residue chain is MKHFLSLALCFSSINAVAVTVPHKSGGTGSPEGSLQFLSLRASAPIGSAISRNNWAVTCDSAQSGNECNKAIDGNKDTFWHTFYGANGDPKPPHTYTIDMKTTQNVNGLSMLPRQDGNQNGWIGRHEVYLSSDGTNWGSPVASGSWFADSTTKYSNFETRPARYVRLVAVTEANGQPWTSIAEINVFQASSYTAPQPGLGRWGPTIDLPIVPAAAAIEPTSGRVLMWSSYRNDAFGGSPGGITLTSSWDPSTGIVSDRTVTVTKHDMFCPGISMDGNGQIVVTGGNDAKKTSLYDSSSDSWIPGPDMQVARGYQSSATMSDGRVFTIGGSWSGGVFEKNGEVYSPSSKTWTSLPNAKVNPMLTADKQGLYRSDNHAWLFGWKKGSVFQAGPSTAMNWYYTSGSGDVKSAGKRQSNRGVAPDAMCGNAVMYDAVKGKILTFGGSPDYQDSDATTNAHIITLGEPGTSPNTVFASNGLYFARTFHTSVVLPDGSTFITGGQRRGIPFEDSTPVFTPEIYVPEQDTFYKQNPNSIVRVYHSISLLLPDGRVFNGGGGLCGDCTTNHFDAQIFTPNYLYNSNGNLATRPKITRTSTQSVKVGGRITISTDSSITKASLIRYGTATHTVNTDQRRIPLTLTNNGGNSYSFQVPSDSGVALPGYWMLFVMNSAGVPSVASTIRVTQ.

Residues 1-24 (MKHFLSLALCFSSINAVAVTVPHK) form the signal peptide. A propeptide spanning residues 25-41 (SGGTGSPEGSLQFLSLR) is cleaved from the precursor. The 148-residue stretch at 42–189 (ASAPIGSAIS…SIAEINVFQA (148 aa)) folds into the F5/8 type C domain. Cysteine 59 and cysteine 68 form a disulfide bridge. 5 Kelch repeats span residues 223-268 (RVLM…HDMF), 279-321 (QIVV…TMSD), 323-372 (RVFT…LYRS), 436-490 (KILT…VLPD), and 492-544 (STFI…LLLP). The segment at residues 269-313 (CPGISMDGNGQIVVTGGNDAKKTSLYDSSSDSWIPGPDMQVARGY) is a cross-link (3'-(S-cysteinyl)-tyrosine (Cys-Tyr)). Tyrosine 313 is a binding site for Cu cation. Residues tyrosine 536 and histidine 537 each coordinate Cu cation. The active-site Proton acceptor is the tyrosine 536. Cysteine 556 and cysteine 559 are joined by a disulfide. Histidine 622 contacts Cu cation.

In terms of assembly, monomer. The cofactor is Cu(2+). Galactose oxidase contains a protein-derived free radical cofactor. In the active state, Tyr-313, which is cross-linked to Cys-269 via a thioether bond, is oxidized to a radical and acts with Cu(2+) as a two-electron acceptor in the oxidation reaction. The cross-link is believed to modulate the redox potential of the tyrosyl radical, which is further stabilized by a stacking interaction with Trp-331 in the active site. The post-translational formation of the cross-link is closely linked to the propeptide cleavage event, and both are copper-dependent, autocatalytic processes. The propeptide may act as an intramolecular chaperone, facilitating thioester bond formation and copper binding by positioning of active-site residues, including copper ligands.

The protein localises to the secreted. The enzyme catalyses D-galactose + O2 = D-galacto-hexodialdose + H2O2. In terms of biological role, catalyzes the sterospecific oxidation of primary alcohols to the corresponding aldehydes. The biologically relevant substrate of the enzyme is not known as the enzyme exhibits broad substrate specificity from small alcohols through sugars to oligo- and polysaccharides. This chain is Galactose oxidase (GAOA), found in Gibberella zeae (strain ATCC MYA-4620 / CBS 123657 / FGSC 9075 / NRRL 31084 / PH-1) (Wheat head blight fungus).